The sequence spans 132 residues: Small ribosomal subunit protein uS8 (132 aa).

The protein belongs to the universal ribosomal protein uS8 family. In terms of assembly, part of the 30S ribosomal subunit. Contacts proteins S5 and S12.

One of the primary rRNA binding proteins, it binds directly to 16S rRNA central domain where it helps coordinate assembly of the platform of the 30S subunit. In Limosilactobacillus fermentum (strain NBRC 3956 / LMG 18251) (Lactobacillus fermentum), this protein is Small ribosomal subunit protein uS8.